A 199-amino-acid polypeptide reads, in one-letter code: Recombination protein RecR (199 aa).

The C4-type zinc-finger motif lies at 57 to 72 (CSVCGNLTDDDPCNIC). The Toprim domain maps to 80–176 (STVLVVEDSK…TVTRLARGLA (97 aa)).

It belongs to the RecR family.

May play a role in DNA repair. It seems to be involved in an RecBC-independent recombinational process of DNA repair. It may act with RecF and RecO. The polypeptide is Recombination protein RecR (Streptococcus mutans serotype c (strain ATCC 700610 / UA159)).